Here is a 2410-residue protein sequence, read N- to C-terminus: Reducing polyketide synthase FUB1 (2410 aa).

Low complexity predominate over residues 1 to 42 (MTLSNGSNGANGTSNGNGAHPSANGFHNAANGGANNGSANGG). Positions 1–52 (MTLSNGSNGANGTSNGNGAHPSANGFHNAANGGANNGSANGGAEHDAGRPQV) are disordered. Residues 57 to 479 (SSAIAVIGVS…GANAHAVLDD (423 aa)) form the Ketosynthase family 3 (KS3) domain. Active-site for beta-ketoacyl synthase activity residues include Cys-230, His-365, and His-403. The tract at residues 608–929 (TFIFTGQGAQ…FSAIKRKQDA (322 aa)) is malonyl-CoA:ACP transacylase (MAT) domain. Ser-699 functions as the For malonyltransferase activity in the catalytic mechanism. Residues 994 to 1127 (LELLGVRDPR…GLVSTSYKHD (134 aa)) are N-terminal hotdog fold. A PKS/mFAS DH domain is found at 994 to 1307 (LELLGVRDPR…TVPLRGASDS (314 aa)). Residues 995–1302 (ELLGVRDPRS…LKGCKTVPLR (308 aa)) are dehydratase (DH) domain. His-1026 (proton acceptor; for dehydratase activity) is an active-site residue. The interval 1155–1307 (LPSVDPTVFY…TVPLRGASDS (153 aa)) is C-terminal hotdog fold. Asp-1220 serves as the catalytic Proton donor; for dehydratase activity. The tract at residues 1714–2026 (GLLDTLEYLS…SGGHVGKIVL (313 aa)) is enoyl reductase (ER) domain. The interval 2050–2226 (ATYVLIGGLG…AATSINLSLV (177 aa)) is ketoreductase (KR) domain. A Carrier domain is found at 2329–2406 (EVYEIVLQQL…GFTKKVMAKS (78 aa)). Ser-2366 is subject to O-(pantetheine 4'-phosphoryl)serine.

Its pathway is mycotoxin biosynthesis. Its function is as follows. Reducing polyketide synthase; part of the gene cluster that mediates the biosynthesis of fusaric acid, a mycotoxin with low to moderate toxicity to animals and humans, but with high phytotoxic properties. L-aspartate is suggested as fusaric acid amino acid precursor that is activated and further processed to O-acetyl-L-homoserine by cluster enzymes aspartate kinase FUB3 and homoserine O-acetyltransferase FUB5, as well as enzymes of the primary metabolism. The polyketide synthase (PKS) FUB1 generates the triketide trans-2-hexenal which is presumptively released by the hydrolase FUB4 and linked to the NRPS-bound amino acid precursor by NAD(P)-dependent dehydrogenase FUB6. FUB1, FUB4, and the non-canonical NRPS Fub8 may form an enzyme complex. Further processing of the NRPS-bound intermediate might be carried out by FUB6 and the sulfhydrylase FUB7, enabling a spontaneous electrocyclization to close the carbon backbone of fusaric acid. Dihydrofusaric acid is likely to be released via reduction by the thioester reductase (TR) domain of FUB8 whereupon the final oxidation to fusaric acid may (also) be performed by the FMN-dependent dehydrogenase FUB9. In Gibberella fujikuroi (strain CBS 195.34 / IMI 58289 / NRRL A-6831) (Bakanae and foot rot disease fungus), this protein is Reducing polyketide synthase FUB1.